We begin with the raw amino-acid sequence, 881 residues long: DNA mismatch repair protein MutS (881 aa).

632 to 639 (GPNMGGKS) is an ATP binding site.

The protein belongs to the DNA mismatch repair MutS family.

Its function is as follows. This protein is involved in the repair of mismatches in DNA. It is possible that it carries out the mismatch recognition step. This protein has a weak ATPase activity. The sequence is that of DNA mismatch repair protein MutS from Chelativorans sp. (strain BNC1).